The primary structure comprises 524 residues: MGLHLYDTRRRRVRPFEPLRPGHVGVYVCGPTVQAAPHVGHIRTALPFDLLRRWLVQSGRSVTFVQNVTDIDDKIIINADRDGTSVWELATRQTRAFDDAYRTLGILPPTIQPRATGHIPEMIALVSALVEGGYAYASGGSVWFRVGAFADYGALSHQRPDAMQPSVEAEPGKADPRDFALWKAARPGEPFWSSPWGDGRPGWHLECSAMAGKYLGPVFDIHGGGLDLVFPHHENERAQTVCAATARPASNAASADSPGPGGGEPGGGEPSSGEMARYWMHVGLLTTGGTKMSKSLGNSVLVADALDAVRPQVLRYHLLSAHYRSTLEYSAEALAESTAAHDRVETFVRNALDILGGPGEAAALAADEVVSSVAGAQPTVAGARPVPVPGPGGESRLTPRRAWSDFTIAMDDDLAVGRALAALFGAVSQGNQVLSKAHSRELAGWVDVTRRMLNIFGLDPHEQWPTAGAEFRPALDGAMQVVLDLRSAARARRDYAEADAIRSRLAAAGLIVEDTPEGQRWHLA.

Zn(2+) is bound at residue Cys-29. The short motif at 31–41 is the 'HIGH' region element; sequence PTVQAAPHVGH. Cys-207, His-232, and Glu-236 together coordinate Zn(2+). Positions 246–258 are enriched in low complexity; sequence ARPASNAASADSP. The disordered stretch occupies residues 246–273; the sequence is ARPASNAASADSPGPGGGEPGGGEPSSG. Residues 259-270 show a composition bias toward gly residues; that stretch reads GPGGGEPGGGEP. Residues 291 to 295 carry the 'KMSKS' region motif; sequence KMSKS. Lys-294 lines the ATP pocket.

This sequence belongs to the class-I aminoacyl-tRNA synthetase family. As to quaternary structure, monomer. Zn(2+) serves as cofactor.

It is found in the cytoplasm. It carries out the reaction tRNA(Cys) + L-cysteine + ATP = L-cysteinyl-tRNA(Cys) + AMP + diphosphate. This Frankia casuarinae (strain DSM 45818 / CECT 9043 / HFP020203 / CcI3) protein is Cysteine--tRNA ligase.